Here is a 186-residue protein sequence, read N- to C-terminus: Ribosome-recycling factor (186 aa).

The protein belongs to the RRF family.

Its subcellular location is the cytoplasm. Its function is as follows. Responsible for the release of ribosomes from messenger RNA at the termination of protein biosynthesis. May increase the efficiency of translation by recycling ribosomes from one round of translation to another. This chain is Ribosome-recycling factor, found in Endomicrobium trichonymphae.